Reading from the N-terminus, the 616-residue chain is Alpha terpineol synthase, chloroplastic (616 aa).

The N-terminal 41 residues, 1–41, are a transit peptide targeting the chloroplast; it reads MALLSVAPLQKPLTSCSPFSTTMPTLGVCTPRKVVTPSIIM. Positions 367, 371, and 519 each coordinate Mg(2+). Positions 367–371 match the DDXXD motif motif; the sequence is DDIYD.

Belongs to the terpene synthase family. Tpsd subfamily. Mg(2+) is required as a cofactor. The cofactor is Mn(2+).

It localises to the plastid. The protein resides in the chloroplast. The catalysed reaction is (2E)-geranyl diphosphate + H2O = (S)-alpha-terpineol + diphosphate. It catalyses the reaction (2E)-geranyl diphosphate + H2O = 1,8-cineole + diphosphate. The enzyme catalyses (2E)-geranyl diphosphate = beta-myrcene + diphosphate. It carries out the reaction (2E)-geranyl diphosphate = (1S,5S)-sabinene + diphosphate. It participates in terpene metabolism; oleoresin biosynthesis. The protein operates within secondary metabolite biosynthesis; terpenoid biosynthesis. In terms of biological role, monoterpene synthase (TPS) involved in the biosynthesis of monoterpene natural products included in conifer oleoresin secretions and volatile emissions; these compounds contribute to biotic and abiotic stress defense against herbivores and pathogens. Catalyzes the conversion of (2E)-geranyl diphosphate (GPP) to alpha-terpineol and, to a lower extent, to 1,8-cineole, myrcene and (-)-sabinene. This chain is Alpha terpineol synthase, chloroplastic, found in Pinus contorta (Shore pine).